We begin with the raw amino-acid sequence, 142 residues long: Putative regulator of rDNA transcription protein 16 (142 aa).

A run of 3 helical transmembrane segments spans residues I19–A39, F84–L104, and S111–H131.

Its subcellular location is the membrane. Functionally, identified in a screen for mutants with decreased levels of rDNA transcription. The polypeptide is Putative regulator of rDNA transcription protein 16 (RRT16) (Saccharomyces cerevisiae (strain ATCC 204508 / S288c) (Baker's yeast)).